The following is a 464-amino-acid chain: Adenylyltransferase and sulfurtransferase MOCS3 (464 aa).

ATP-binding positions include Gly-101, Asp-122, 129–133, Lys-146, and 190–191; these read NNMHR and DN. Positions 231 and 234 each coordinate Zn(2+). Catalysis depends on Cys-248, which acts as the Glycyl thioester intermediate; for adenylyltransferase activity. Positions 306 and 309 each coordinate Zn(2+). The region spanning 358 to 462 is the Rhodanese domain; sequence KKEQHVLLDV…WAANVNPNFP (105 aa). Cys-422 (cysteine persulfide intermediate; for sulfurtransferase activity) is an active-site residue.

This sequence in the N-terminal section; belongs to the HesA/MoeB/ThiF family. UBA4 subfamily. It depends on Zn(2+) as a cofactor.

It localises to the cytoplasm. The catalysed reaction is [molybdopterin-synthase sulfur-carrier protein]-C-terminal Gly-Gly + ATP + H(+) = [molybdopterin-synthase sulfur-carrier protein]-C-terminal Gly-Gly-AMP + diphosphate. The enzyme catalyses [molybdopterin-synthase sulfur-carrier protein]-C-terminal Gly-Gly-AMP + S-sulfanyl-L-cysteinyl-[cysteine desulfurase] + AH2 = [molybdopterin-synthase sulfur-carrier protein]-C-terminal-Gly-aminoethanethioate + L-cysteinyl-[cysteine desulfurase] + A + AMP + 2 H(+). It participates in tRNA modification; 5-methoxycarbonylmethyl-2-thiouridine-tRNA biosynthesis. The protein operates within cofactor biosynthesis; molybdopterin biosynthesis. Functionally, plays a central role in 2-thiolation of mcm(5)S(2)U at tRNA wobble positions of cytosolic tRNA(Lys), tRNA(Glu) and tRNA(Gln). Also essential during biosynthesis of the molybdenum cofactor. Acts by mediating the C-terminal thiocarboxylation of sulfur carriers URM1 and MOCS2A. Its N-terminus first activates URM1 and MOCS2A as acyl-adenylates (-COAMP), then the persulfide sulfur on the catalytic cysteine is transferred to URM1 and MOCS2A to form thiocarboxylation (-COSH) of their C-terminus. The reaction probably involves hydrogen sulfide that is generated from the persulfide intermediate and that acts as a nucleophile towards URM1 and MOCS2A. Subsequently, a transient disulfide bond is formed. Does not use thiosulfate as sulfur donor; NFS1 probably acting as a sulfur donor for thiocarboxylation reactions. The sequence is that of Adenylyltransferase and sulfurtransferase MOCS3 from Arabidopsis thaliana (Mouse-ear cress).